A 222-amino-acid polypeptide reads, in one-letter code: MKTWKDVIGNEKTQPYFQHILAQVHQARASGKVVYPPQADIFNAFKLTEFDQVKVVLLGQDPYHGPNQAHGLAFSVKPPVAPPPSLMNMYKELSNEYPDFHMPNHGSLEQWAQQGVLLLNTVLTVERGQAHSHADFGWETFTDHVIHALNEQREHLVFLLWGSHAQKKGQFIDRSKHCVLTAPHPSPLSAHRGFFGCGHFTQTNDYLRRHHISEINWQLDNI.

Asp-61 functions as the Proton acceptor in the catalytic mechanism.

Belongs to the uracil-DNA glycosylase (UDG) superfamily. UNG family.

The protein localises to the cytoplasm. It carries out the reaction Hydrolyzes single-stranded DNA or mismatched double-stranded DNA and polynucleotides, releasing free uracil.. Functionally, excises uracil residues from the DNA which can arise as a result of misincorporation of dUMP residues by DNA polymerase or due to deamination of cytosine. This is Uracil-DNA glycosylase from Actinobacillus succinogenes (strain ATCC 55618 / DSM 22257 / CCUG 43843 / 130Z).